We begin with the raw amino-acid sequence, 396 residues long: Acetate kinase (396 aa).

N7 lines the Mg(2+) pocket. K14 is an ATP binding site. Residue R88 coordinates substrate. D145 acts as the Proton donor/acceptor in catalysis. ATP contacts are provided by residues 205-209, 279-281, and 327-331; these read HLGNG, DFR, and GIGEN. E381 contributes to the Mg(2+) binding site.

The protein belongs to the acetokinase family. In terms of assembly, homodimer. It depends on Mg(2+) as a cofactor. Requires Mn(2+) as cofactor.

The protein localises to the cytoplasm. It catalyses the reaction acetate + ATP = acetyl phosphate + ADP. Its pathway is metabolic intermediate biosynthesis; acetyl-CoA biosynthesis; acetyl-CoA from acetate: step 1/2. Catalyzes the formation of acetyl phosphate from acetate and ATP. Can also catalyze the reverse reaction. This chain is Acetate kinase, found in Campylobacter jejuni subsp. jejuni serotype O:2 (strain ATCC 700819 / NCTC 11168).